Consider the following 1229-residue polypeptide: DNA-directed RNA polymerase subunit beta (1229 aa).

The protein belongs to the RNA polymerase beta chain family. As to quaternary structure, the RNAP catalytic core consists of 2 alpha, 1 beta, 1 beta' and 1 omega subunit. When a sigma factor is associated with the core the holoenzyme is formed, which can initiate transcription.

It catalyses the reaction RNA(n) + a ribonucleoside 5'-triphosphate = RNA(n+1) + diphosphate. DNA-dependent RNA polymerase catalyzes the transcription of DNA into RNA using the four ribonucleoside triphosphates as substrates. This Roseiflexus sp. (strain RS-1) protein is DNA-directed RNA polymerase subunit beta.